The sequence spans 509 residues: Glycogen synthase (509 aa).

K47 lines the ADP-alpha-D-glucose pocket.

It belongs to the glycosyltransferase 1 family. Bacterial/plant glycogen synthase subfamily.

It catalyses the reaction [(1-&gt;4)-alpha-D-glucosyl](n) + ADP-alpha-D-glucose = [(1-&gt;4)-alpha-D-glucosyl](n+1) + ADP + H(+). The protein operates within glycan biosynthesis; glycogen biosynthesis. Its function is as follows. Synthesizes alpha-1,4-glucan chains using ADP-glucose. The protein is Glycogen synthase of Xanthomonas euvesicatoria pv. vesicatoria (strain 85-10) (Xanthomonas campestris pv. vesicatoria).